A 702-amino-acid polypeptide reads, in one-letter code: Elongation factor G 2 (702 aa).

In terms of domain architecture, tr-type G spans 8-285 (DMVRNIGISA…AVTYYLPSPA (278 aa)). Residues 17–24 (AHIDSGKT), 84–88 (DTPGH), and 138–141 (NKLD) contribute to the GTP site.

Belongs to the TRAFAC class translation factor GTPase superfamily. Classic translation factor GTPase family. EF-G/EF-2 subfamily.

The protein localises to the cytoplasm. Functionally, catalyzes the GTP-dependent ribosomal translocation step during translation elongation. During this step, the ribosome changes from the pre-translocational (PRE) to the post-translocational (POST) state as the newly formed A-site-bound peptidyl-tRNA and P-site-bound deacylated tRNA move to the P and E sites, respectively. Catalyzes the coordinated movement of the two tRNA molecules, the mRNA and conformational changes in the ribosome. This Bdellovibrio bacteriovorus (strain ATCC 15356 / DSM 50701 / NCIMB 9529 / HD100) protein is Elongation factor G 2.